We begin with the raw amino-acid sequence, 110 residues long: Protein YcgL (110 aa).

The YcgL domain maps to methionine 14–leucine 98. Residues proline 87–arginine 110 are disordered. Polar residues predominate over residues histidine 97–arginine 110.

This is Protein YcgL from Salmonella choleraesuis (strain SC-B67).